The following is a 219-amino-acid chain: Proteasome subunit beta type-9 (219 aa).

Residues 1-20 (MLRAGAPTAGSFRTEEVHTG) constitute a propeptide, removed in mature form. Residue T21 is the Nucleophile of the active site. N6-acetyllysine is present on residues K53 and K109.

It belongs to the peptidase T1B family. The 26S proteasome consists of a 20S proteasome core and two 19S regulatory subunits. The 20S proteasome core is composed of 28 subunits that are arranged in four stacked rings, resulting in a barrel-shaped structure. The two end rings are each formed by seven alpha subunits, and the two central rings are each formed by seven beta subunits. The catalytic chamber with the active sites is on the inside of the barrel. Component of the immunoproteasome, where it displaces the equivalent housekeeping subunit PSMB6. Component of the spermatoproteasome, a form of the proteasome specifically found in testis. Post-translationally, autocleaved. The resulting N-terminal Thr residue of the mature subunit is responsible for the nucleophile proteolytic activity.

Its subcellular location is the cytoplasm. It is found in the nucleus. The catalysed reaction is Cleavage of peptide bonds with very broad specificity.. Functionally, the proteasome is a multicatalytic proteinase complex which is characterized by its ability to cleave peptides with Arg, Phe, Tyr, Leu, and Glu adjacent to the leaving group at neutral or slightly basic pH. The proteasome has an ATP-dependent proteolytic activity. This subunit is involved in antigen processing to generate class I binding peptides. This is Proteasome subunit beta type-9 (Psmb9) from Mus terricolor (Earth-colored mouse).